A 312-amino-acid chain; its full sequence is Ribosomal RNA small subunit methyltransferase H (312 aa).

S-adenosyl-L-methionine-binding positions include 32-34, aspartate 52, phenylalanine 79, aspartate 100, and glutamine 107; that span reads AGH.

The protein belongs to the methyltransferase superfamily. RsmH family.

Its subcellular location is the cytoplasm. The catalysed reaction is cytidine(1402) in 16S rRNA + S-adenosyl-L-methionine = N(4)-methylcytidine(1402) in 16S rRNA + S-adenosyl-L-homocysteine + H(+). Functionally, specifically methylates the N4 position of cytidine in position 1402 (C1402) of 16S rRNA. The polypeptide is Ribosomal RNA small subunit methyltransferase H (Listeria monocytogenes serovar 1/2a (strain ATCC BAA-679 / EGD-e)).